Reading from the N-terminus, the 249-residue chain is Probable transcriptional regulatory protein LBL_2537 (249 aa).

Belongs to the TACO1 family.

It is found in the cytoplasm. This is Probable transcriptional regulatory protein LBL_2537 from Leptospira borgpetersenii serovar Hardjo-bovis (strain L550).